The chain runs to 159 residues: Vesicle transport protein SFT2A (159 aa).

Over M1–W36 the chain is Cytoplasmic. Residue S9 is modified to Phosphoserine. Residues F37 to L57 traverse the membrane as a helical segment. Residues P58–K62 lie on the Lumenal side of the membrane. A helical transmembrane segment spans residues L63–M83. At G84–R97 the chain is on the cytoplasmic side. Residues L98–W118 form a helical membrane-spanning segment. Residues H119 to G122 are Lumenal-facing. The helical transmembrane segment at L123 to I143 threads the bilayer. Topologically, residues P144–S159 are cytoplasmic.

It belongs to the SFT2 family.

The protein localises to the membrane. Its function is as follows. May be involved in fusion of retrograde transport vesicles derived from an endocytic compartment with the Golgi complex. The polypeptide is Vesicle transport protein SFT2A (Homo sapiens (Human)).